Reading from the N-terminus, the 137-residue chain is Large ribosomal subunit protein uL24 (137 aa).

This sequence belongs to the universal ribosomal protein uL24 family. Part of the 50S ribosomal subunit.

In terms of biological role, one of two assembly initiator proteins, it binds directly to the 5'-end of the 23S rRNA, where it nucleates assembly of the 50S subunit. Its function is as follows. Located at the polypeptide exit tunnel on the outside of the subunit. The sequence is that of Large ribosomal subunit protein uL24 from Sulfurisphaera tokodaii (strain DSM 16993 / JCM 10545 / NBRC 100140 / 7) (Sulfolobus tokodaii).